A 121-amino-acid polypeptide reads, in one-letter code: Large ribosomal subunit protein uL18 (121 aa).

The disordered stretch occupies residues 1 to 25 (MKIVISKPDKNKIRQKRHRRVRGKL). A compositionally biased stretch (basic residues) spans 13–23 (IRQKRHRRVRG).

This sequence belongs to the universal ribosomal protein uL18 family. In terms of assembly, part of the 50S ribosomal subunit; part of the 5S rRNA/L5/L18/L25 subcomplex. Contacts the 5S and 23S rRNAs.

Its function is as follows. This is one of the proteins that bind and probably mediate the attachment of the 5S RNA into the large ribosomal subunit, where it forms part of the central protuberance. The polypeptide is Large ribosomal subunit protein uL18 (Streptococcus pyogenes serotype M28 (strain MGAS6180)).